The following is a 278-amino-acid chain: MTTEPLALDFKSATLYAIRVVLHSADPDQLAEALGRRMADAGSFFENEAVVIDASRVSAPIDWPALVKALGAHKLPVIGVVAENGNLERARAAGLIPVELSAPRTQQSVDPAPPNHVSTPVPAAPEASRAAQEQLRSAMKGDAQAVPTRAARDTTEAASHTPAAPQSSTALVITKPLRSGQRVYARHTDLVVIGMVSQGAEVIADGNIHVYGPLRGKAMAGARGDTSARIFTTHLDAELLAVAGVYRVVEDRLDRNLHNQPALVRLNGDTLHIEALKS.

The tract at residues 104–167 (RTQQSVDPAP…ASHTPAAPQS (64 aa)) is disordered.

Belongs to the MinC family. As to quaternary structure, interacts with MinD and FtsZ.

In terms of biological role, cell division inhibitor that blocks the formation of polar Z ring septums. Rapidly oscillates between the poles of the cell to destabilize FtsZ filaments that have formed before they mature into polar Z rings. Prevents FtsZ polymerization. In Bordetella avium (strain 197N), this protein is Probable septum site-determining protein MinC.